Consider the following 275-residue polypeptide: NH(3)-dependent NAD(+) synthetase (275 aa).

46–53 is an ATP binding site; sequence GISGGQDS. Aspartate 52 provides a ligand contact to Mg(2+). Arginine 140 lines the deamido-NAD(+) pocket. Threonine 160 is a binding site for ATP. Glutamate 165 serves as a coordination point for Mg(2+). Lysine 173 and aspartate 180 together coordinate deamido-NAD(+). Residues lysine 189 and threonine 211 each contribute to the ATP site. A deamido-NAD(+)-binding site is contributed by 260–261; it reads HK.

It belongs to the NAD synthetase family. Homodimer.

The enzyme catalyses deamido-NAD(+) + NH4(+) + ATP = AMP + diphosphate + NAD(+) + H(+). It functions in the pathway cofactor biosynthesis; NAD(+) biosynthesis; NAD(+) from deamido-NAD(+) (ammonia route): step 1/1. In terms of biological role, catalyzes the ATP-dependent amidation of deamido-NAD to form NAD. Uses ammonia as a nitrogen source. The sequence is that of NH(3)-dependent NAD(+) synthetase from Escherichia coli O17:K52:H18 (strain UMN026 / ExPEC).